The sequence spans 180 residues: Segregation and condensation protein B (180 aa).

This sequence belongs to the ScpB family. In terms of assembly, homodimer. Homodimerization may be required to stabilize the binding of ScpA to the Smc head domains. Component of a cohesin-like complex composed of ScpA, ScpB and the Smc homodimer, in which ScpA and ScpB bind to the head domain of Smc. The presence of the three proteins is required for the association of the complex with DNA.

The protein localises to the cytoplasm. In terms of biological role, participates in chromosomal partition during cell division. May act via the formation of a condensin-like complex containing Smc and ScpA that pull DNA away from mid-cell into both cell halves. This Staphylococcus aureus (strain Mu3 / ATCC 700698) protein is Segregation and condensation protein B.